The primary structure comprises 513 residues: Ectonucleoside triphosphate diphosphohydrolase 1 (513 aa).

Over 1–16 the chain is Cytoplasmic; the sequence is MEDRRESELKVFCSKN. Residues 17-37 traverse the membrane as a helical segment; it reads ILSILGFSCIIAVIALLALGL. Topologically, residues 38–481 are extracellular; the sequence is TQNKALPENV…SPPLPHSTYV (444 aa). Residue asparagine 73 is glycosylated (N-linked (GlcNAc...) asparagine). Glutamate 174 (proton acceptor) is an active-site residue. 2 N-linked (GlcNAc...) asparagine glycosylation sites follow: asparagine 227 and asparagine 245. 2 disulfide bridges follow: cysteine 255-cysteine 300 and cysteine 281-cysteine 327. N-linked (GlcNAc...) asparagine glycosylation is found at asparagine 307 and asparagine 336. A disulfide bond links cysteine 340 and cysteine 345. N-linked (GlcNAc...) asparagine glycosylation is present at asparagine 373. Cysteine 393 and cysteine 416 are oxidised to a cystine. N-linked (GlcNAc...) asparagine glycosylation occurs at asparagine 460. The chain crosses the membrane as a helical span at residues 482 to 502; the sequence is FLMVLFSLILLAVIIVGIVVF. Residues 503-513 lie on the Cytoplasmic side of the membrane; sequence HKPSYFWKDMV.

It belongs to the GDA1/CD39 NTPase family. In terms of assembly, homodimer; disulfide-linked. Requires Ca(2+) as cofactor. Mg(2+) is required as a cofactor. In terms of processing, N-glycosylated. The N-terminus is blocked. Post-translationally, palmitoylated on Cys-13; which is required for caveola targeting.

It localises to the membrane. The protein localises to the caveola. It carries out the reaction a ribonucleoside 5'-triphosphate + 2 H2O = a ribonucleoside 5'-phosphate + 2 phosphate + 2 H(+). The catalysed reaction is a ribonucleoside 5'-triphosphate + H2O = a ribonucleoside 5'-diphosphate + phosphate + H(+). It catalyses the reaction a ribonucleoside 5'-diphosphate + H2O = a ribonucleoside 5'-phosphate + phosphate + H(+). The enzyme catalyses ATP + 2 H2O = AMP + 2 phosphate + 2 H(+). It carries out the reaction ATP + H2O = ADP + phosphate + H(+). The catalysed reaction is ADP + H2O = AMP + phosphate + H(+). It catalyses the reaction CTP + 2 H2O = CMP + 2 phosphate + 2 H(+). The enzyme catalyses CTP + H2O = CDP + phosphate + H(+). It carries out the reaction CDP + H2O = CMP + phosphate + H(+). The catalysed reaction is GTP + 2 H2O = GMP + 2 phosphate + 2 H(+). It catalyses the reaction GTP + H2O = GDP + phosphate + H(+). The enzyme catalyses GDP + H2O = GMP + phosphate + H(+). It carries out the reaction ITP + 2 H2O = IMP + 2 phosphate + 2 H(+). The catalysed reaction is ITP + H2O = IDP + phosphate + H(+). It catalyses the reaction IDP + H2O = IMP + phosphate + H(+). The enzyme catalyses UTP + 2 H2O = UMP + 2 phosphate + 2 H(+). It carries out the reaction UTP + H2O = UDP + phosphate + H(+). The catalysed reaction is UDP + H2O = UMP + phosphate + H(+). In terms of biological role, catalyzes the hydrolysis of both di- and triphosphate nucleotides (NDPs and NTPs) and hydrolyze NTPs to nucleotide monophosphates (NMPs) in two distinct successive phosphate-releasing steps, with NDPs as intermediates and participates in the regulation of extracellular levels of nucleotides. By hydrolyzing proinflammatory ATP and platelet-activating ADP to AMP, it blocks platelet aggregation and supports blood flow. In Bos taurus (Bovine), this protein is Ectonucleoside triphosphate diphosphohydrolase 1.